The sequence spans 579 residues: Folliculin (579 aa).

Residues 32-82 (GAGSGDSPGQVEQAEEEEGGIQMSSRVRAHSPAEGASTDSSSPGPKKSDMC) are disordered. Residues serine 62 and serine 73 each carry the phosphoserine modification. Positions 86–242 (RSLAVGHPGY…RNGNAARSLT (157 aa)) constitute a uDENN FLCN/SMCR8-type domain. Residues 287–310 (EKLADLEEESESWDNSEAEEEEKA) are a coiled coil. A compositionally biased stretch (acidic residues) spans 294 to 308 (EESESWDNSEAEEEE). A disordered region spans residues 294–320 (EESESWDNSEAEEEEKAPATAEGAEGR). Phosphoserine is present on residues serine 302, serine 406, serine 537, serine 542, and serine 571. Residues 339–491 (QPPKLSVFKS…ILNKMEAALT (153 aa)) form the cDENN FLCN/SMCR8-type domain. The dDENN FLCN/SMCR8-type domain occupies 493–558 (QNLSVDVVDQ…LLKFWMTGLS (66 aa)).

This sequence belongs to the folliculin family. Interacts (via C-terminus) with FNIP1 or FNIP2 (via C-terminus). Component of the lysosomal folliculin complex (LFC), composed of FLCN, FNIP1 (or FNIP2), RagA/RRAGA or RagB/RRAGB GDP-bound, RagC/RRAGC or RagD/RRAGD GTP-bound, and Ragulator. Interaction with FNIP1 or FNIP2 mediates indirect interaction with the PRKAA1, PRKAB1 and PRKAG1 subunits of 5'-AMP-activated protein kinase (AMPK). Interacts with HSP90AA1 in the presence of FNIP1. Interacts with HSP70, STUB1, CDC37, AHSA1, CCT2, STIP1, PTGES3 and PPP5C. Interacts with GABARAP; interaction takes place in the presence of FNIP1 and/or FNIP2. Interacts with RILP; the interaction is direct and promotes association between RILP and RAB34. Interacts with KIF3A and KIF3B. Interacts with lactate dehydrogenase LDHA, but not LDHB; the interaction is direct, may preferentially bind LDHA dimers rather than tetramers, and regulates LDHA activity, acting as an uncompetitive inhibitor. In terms of processing, phosphorylation by ULK1 modulates the interaction with GABARAP and is required to regulate autophagy. Expressed in kidney.

The protein localises to the lysosome membrane. The protein resides in the cytoplasm. Its subcellular location is the cytosol. It localises to the cell projection. It is found in the cilium. The protein localises to the cytoskeleton. The protein resides in the microtubule organizing center. Its subcellular location is the centrosome. It localises to the spindle. It is found in the nucleus. With respect to regulation, GTPase-activating activity is inhibited in the folliculin complex (LFC), which stabilizes the GDP-bound state of RagA/RRAGA (or RagB/RRAGB), because Arg-164 is located far from the RagC/RRAGC or RagD/RRAGD nucleotide pocket. Disassembly of the LFC complex upon amino acid restimulation liberates the GTPase-activating activity. Its function is as follows. Multi-functional protein, involved in both the cellular response to amino acid availability and in the regulation of glycolysis. GTPase-activating protein that plays a key role in the cellular response to amino acid availability through regulation of the non-canonical mTORC1 signaling cascade controlling the MiT/TFE factors TFEB and TFE3. Activates mTORC1 by acting as a GTPase-activating protein: specifically stimulates GTP hydrolysis by RagC/RRAGC or RagD/RRAGD, promoting the conversion to the GDP-bound state of RagC/RRAGC or RagD/RRAGD, and thereby activating the kinase activity of mTORC1. The GTPase-activating activity is inhibited during starvation and activated in presence of nutrients. Acts as a key component for non-canonical mTORC1-dependent control of the MiT/TFE factors TFEB and TFE3, while it is not involved in mTORC1-dependent phosphorylation of canonical RPS6KB1/S6K1 and EIF4EBP1/4E-BP1. In low-amino acid conditions, the lysosomal folliculin complex (LFC) is formed on the membrane of lysosomes, which inhibits the GTPase-activating activity of FLCN, inactivates mTORC1 and maximizes nuclear translocation of TFEB and TFE3. Upon amino acid restimulation, RagA/RRAGA (or RagB/RRAGB) nucleotide exchange promotes disassembly of the LFC complex and liberates the GTPase-activating activity of FLCN, leading to activation of mTORC1 and subsequent cytoplasmic retention of TFEB and TFE3. Indirectly acts as a positive regulator of Wnt signaling by promoting mTOR-dependent cytoplasmic retention of MiT/TFE factor TFE3. Required for the exit of hematopoietic stem cell from pluripotency by promoting mTOR-dependent cytoplasmic retention of TFE3, thereby increasing Wnt signaling. Involved in the control of embryonic stem cells differentiation; together with LAMTOR1 it is necessary to recruit and activate RagC/RRAGC and RagD/RRAGD at the lysosomes, and to induce exit of embryonic stem cells from pluripotency via non-canonical, mTOR-independent TFE3 inactivation. Acts as an inhibitor of browning of adipose tissue by regulating mTOR-dependent cytoplasmic retention of TFE3. In response to flow stress, regulates STK11/LKB1 accumulation and mTORC1 activation through primary cilia: may act by recruiting STK11/LKB1 to primary cilia for activation of AMPK resided at basal bodies, causing mTORC1 down-regulation. Together with FNIP1 and/or FNIP2, regulates autophagy: following phosphorylation by ULK1, interacts with GABARAP and promotes autophagy. Required for starvation-induced perinuclear clustering of lysosomes by promoting association of RILP with its effector RAB34. Regulates glycolysis by binding to lactate dehydrogenase LDHA, acting as an uncompetitive inhibitor. This chain is Folliculin, found in Rattus norvegicus (Rat).